The following is a 355-amino-acid chain: Phosphoribosylformylglycinamidine cyclo-ligase (355 aa).

This sequence belongs to the AIR synthase family.

Its subcellular location is the cytoplasm. The catalysed reaction is 2-formamido-N(1)-(5-O-phospho-beta-D-ribosyl)acetamidine + ATP = 5-amino-1-(5-phospho-beta-D-ribosyl)imidazole + ADP + phosphate + H(+). Its pathway is purine metabolism; IMP biosynthesis via de novo pathway; 5-amino-1-(5-phospho-D-ribosyl)imidazole from N(2)-formyl-N(1)-(5-phospho-D-ribosyl)glycinamide: step 2/2. The chain is Phosphoribosylformylglycinamidine cyclo-ligase from Paraburkholderia phytofirmans (strain DSM 17436 / LMG 22146 / PsJN) (Burkholderia phytofirmans).